The chain runs to 263 residues: tRNA pseudouridine synthase A (263 aa).

The active-site Nucleophile is D54. Substrate is bound at residue Y113.

It belongs to the tRNA pseudouridine synthase TruA family. In terms of assembly, homodimer.

It carries out the reaction uridine(38/39/40) in tRNA = pseudouridine(38/39/40) in tRNA. Functionally, formation of pseudouridine at positions 38, 39 and 40 in the anticodon stem and loop of transfer RNAs. This is tRNA pseudouridine synthase A from Lactobacillus helveticus (strain DPC 4571).